Here is a 585-residue protein sequence, read N- to C-terminus: Pyruvate kinase (585 aa).

Residue R32 coordinates substrate. K(+) is bound by residues N34, S36, D66, and T67. An ATP-binding site is contributed by 34-37 (NFSH). R73 and K156 together coordinate ATP. Residue E221 participates in Mg(2+) binding. 3 residues coordinate substrate: G244, D245, and T277. Position 245 (D245) interacts with Mg(2+).

It belongs to the pyruvate kinase family. This sequence in the C-terminal section; belongs to the PEP-utilizing enzyme family. Mg(2+) serves as cofactor. It depends on K(+) as a cofactor.

It carries out the reaction pyruvate + ATP = phosphoenolpyruvate + ADP + H(+). It participates in carbohydrate degradation; glycolysis; pyruvate from D-glyceraldehyde 3-phosphate: step 5/5. This chain is Pyruvate kinase (pyk), found in Staphylococcus epidermidis (strain ATCC 35984 / DSM 28319 / BCRC 17069 / CCUG 31568 / BM 3577 / RP62A).